We begin with the raw amino-acid sequence, 623 residues long: V-type proton ATPase catalytic subunit A (623 aa).

Residue 252-259 (GAFGCGKT) participates in ATP binding.

It belongs to the ATPase alpha/beta chains family. In terms of assembly, V-ATPase is a heteromultimeric enzyme composed of a peripheral catalytic V1 complex (main components: subunits A, B, C, D, E, and F) attached to an integral membrane V0 proton pore complex (main component: the proteolipid protein).

The catalysed reaction is ATP + H2O + 4 H(+)(in) = ADP + phosphate + 5 H(+)(out). Its function is as follows. Catalytic subunit of the peripheral V1 complex of vacuolar ATPase. V-ATPase vacuolar ATPase is responsible for acidifying a variety of intracellular compartments in eukaryotic cells. This is V-type proton ATPase catalytic subunit A (CVA69.24) from Gossypium hirsutum (Upland cotton).